The primary structure comprises 89 residues: MAVTTDQKAQVVRDYQRAAGDTGSPEVQVALLTARINDLADHFKTHVKDHHSRRGLLRMVSRRRKLLDYLKQNSVESYRTLIERLGLRK.

It belongs to the universal ribosomal protein uS15 family. Part of the 30S ribosomal subunit. Forms a bridge to the 50S subunit in the 70S ribosome, contacting the 23S rRNA.

Its function is as follows. One of the primary rRNA binding proteins, it binds directly to 16S rRNA where it helps nucleate assembly of the platform of the 30S subunit by binding and bridging several RNA helices of the 16S rRNA. Functionally, forms an intersubunit bridge (bridge B4) with the 23S rRNA of the 50S subunit in the ribosome. The polypeptide is Small ribosomal subunit protein uS15 (Nitrosospira multiformis (strain ATCC 25196 / NCIMB 11849 / C 71)).